A 630-amino-acid chain; its full sequence is WD repeat-containing protein 26 homolog (630 aa).

Positions 1-13 (MQSTSSTSSGSCS) are enriched in low complexity. The disordered stretch occupies residues 1–90 (MQSTSSTSSG…NNRENTSCSG (90 aa)). Phosphoserine is present on residues Ser-36 and Ser-40. Polar residues-rich tracts occupy residues 48–57 (PSGSSAATNG) and 66–75 (IVNNNGSSSR). The region spanning 96–128 (SNQEIIRLIGQYLHDVGLDKSVQTLMLESGCYL) is the LisH domain. One can recognise a CTLH domain in the interval 129-190 (EHPSATKFRE…EHLDDGNPLD (62 aa)). 7 WD repeats span residues 312–351 (DHCDEVWFCKFSPDGLKLATGSKDSTVIIWDVDPYKLTLK), 359–400 (QAQL…LVVK), 404–443 (SLEDSLACGAFSRDGARFVCGGQKGQLYLCDLNGTIVDSW), 445–482 (GVRVNSIAFRADNKTILAADNHYRIRGYNFDSPRSDFD), 485–524 (REPHPIMTFSINSADRLALLNVSNQGLHLWDIEDKCLVRR), 529–569 (RQSN…PLAK), and 572–612 (GHTK…SSAT). The tract at residues 604–630 (PKPNGSSATTESDDCSSSSSSSSWNMT) is disordered. Residues 609–630 (SSATTESDDCSSSSSSSSWNMT) show a composition bias toward low complexity.

The protein localises to the cytoplasm. The protein resides in the mitochondrion. G-beta-like protein involved in cell signal transduction. This chain is WD repeat-containing protein 26 homolog, found in Drosophila melanogaster (Fruit fly).